The chain runs to 361 residues: Probable G-protein coupled receptor 25 (361 aa).

Over Met1 to Tyr39 the chain is Extracellular. A helical membrane pass occupies residues Val40–Val60. At Val61 to Asp75 the chain is on the cytoplasmic side. A helical transmembrane segment spans residues Thr76–Ala96. The Extracellular segment spans residues Ala97–Gly126. The helical transmembrane segment at Ala127–Ala147 threads the bilayer. At Arg148–Cys155 the chain is on the cytoplasmic side. Residues Ala156–Val176 traverse the membrane as a helical segment. Residues Tyr177 to Gln200 lie on the Extracellular side of the membrane. A helical membrane pass occupies residues Gly201–Phe220. At Cys221 to Ser242 the chain is on the cytoplasmic side. Residues Leu243–Leu263 traverse the membrane as a helical segment. Residues Arg264–Leu289 lie on the Extracellular side of the membrane. The helical transmembrane segment at Thr290–Leu310 threads the bilayer. At Asp311–Trp361 the chain is on the cytoplasmic side.

This sequence belongs to the G-protein coupled receptor 1 family.

It localises to the cell membrane. In terms of biological role, orphan receptor. The chain is Probable G-protein coupled receptor 25 (GPR25) from Homo sapiens (Human).